Reading from the N-terminus, the 278-residue chain is Bifunctional protein FolD (278 aa).

Residues 165 to 167 (GRS), serine 190, and threonine 231 each bind NADP(+).

It belongs to the tetrahydrofolate dehydrogenase/cyclohydrolase family. As to quaternary structure, homodimer.

The catalysed reaction is (6R)-5,10-methylene-5,6,7,8-tetrahydrofolate + NADP(+) = (6R)-5,10-methenyltetrahydrofolate + NADPH. It carries out the reaction (6R)-5,10-methenyltetrahydrofolate + H2O = (6R)-10-formyltetrahydrofolate + H(+). It functions in the pathway one-carbon metabolism; tetrahydrofolate interconversion. Catalyzes the oxidation of 5,10-methylenetetrahydrofolate to 5,10-methenyltetrahydrofolate and then the hydrolysis of 5,10-methenyltetrahydrofolate to 10-formyltetrahydrofolate. This chain is Bifunctional protein FolD, found in Clostridium acetobutylicum (strain ATCC 824 / DSM 792 / JCM 1419 / IAM 19013 / LMG 5710 / NBRC 13948 / NRRL B-527 / VKM B-1787 / 2291 / W).